The sequence spans 204 residues: Lysozyme G (204 aa).

A signal peptide spans 1–19 (MHLMLVLLGLAALLGTSQS). Cystine bridges form between cysteine 23–cysteine 79 and cysteine 37–cysteine 48. Catalysis depends on residues glutamate 92 and aspartate 105.

This sequence belongs to the glycosyl hydrolase 23 family.

The protein resides in the secreted. The enzyme catalyses Hydrolysis of (1-&gt;4)-beta-linkages between N-acetylmuramic acid and N-acetyl-D-glucosamine residues in a peptidoglycan and between N-acetyl-D-glucosamine residues in chitodextrins.. Its function is as follows. Has bacteriolytic activity against M.luteus. This Dromaius novaehollandiae (Emu) protein is Lysozyme G.